Consider the following 145-residue polypeptide: Large ribosomal subunit protein uL11 (145 aa).

Belongs to the universal ribosomal protein uL11 family. Part of the ribosomal stalk of the 50S ribosomal subunit. Interacts with L10 and the large rRNA to form the base of the stalk. L10 forms an elongated spine to which L12 dimers bind in a sequential fashion forming a multimeric L10(L12)X complex. Post-translationally, one or more lysine residues are methylated.

In terms of biological role, forms part of the ribosomal stalk which helps the ribosome interact with GTP-bound translation factors. The polypeptide is Large ribosomal subunit protein uL11 (Rubrobacter xylanophilus (strain DSM 9941 / JCM 11954 / NBRC 16129 / PRD-1)).